Reading from the N-terminus, the 432-residue chain is Mitochondrial distribution and morphology protein 12 (432 aa).

The region spanning 1–432 (MSIEVDWRAA…VFPSFWTFLI (432 aa)) is the SMP-LTD domain. 2 disordered regions span residues 182–273 (WTDP…PRMR) and 354–377 (QQEA…PKRQ). A compositionally biased stretch (low complexity) spans 214–234 (TSNPTSRPSTSSTLPSHPSAS). 2 stretches are compositionally biased toward basic and acidic residues: residues 243-253 (TGKEHGSLAED) and 355-364 (QEARGQDDRP).

Belongs to the MDM12 family. In terms of assembly, component of the ER-mitochondria encounter structure (ERMES) or MDM complex, composed of mmm1, mdm10, mdm12 and mdm34. A mmm1 homodimer associates with one molecule of mdm12 on each side in a pairwise head-to-tail manner, and the SMP-LTD domains of mmm1 and mdm12 generate a continuous hydrophobic tunnel for phospholipid trafficking.

The protein localises to the mitochondrion outer membrane. Its subcellular location is the endoplasmic reticulum membrane. Component of the ERMES/MDM complex, which serves as a molecular tether to connect the endoplasmic reticulum (ER) and mitochondria. Components of this complex are involved in the control of mitochondrial shape and protein biogenesis, and function in nonvesicular lipid trafficking between the ER and mitochondria. Mdm12 is required for the interaction of the ER-resident membrane protein MMM1 and the outer mitochondrial membrane-resident beta-barrel protein mdm10. The mdm12-mmm1 subcomplex functions in the major beta-barrel assembly pathway that is responsible for biogenesis of all mitochondrial outer membrane beta-barrel proteins, and acts in a late step after the SAM complex. The mdm10-mdm12-mmm1 subcomplex further acts in the TOM40-specific pathway after the action of the mdm12-mmm1 complex. Essential for establishing and maintaining the structure of mitochondria and maintenance of mtDNA nucleoids. This chain is Mitochondrial distribution and morphology protein 12, found in Aspergillus flavus (strain ATCC 200026 / FGSC A1120 / IAM 13836 / NRRL 3357 / JCM 12722 / SRRC 167).